The following is a 70-amino-acid chain: Conotoxin Pl171 (70 aa).

The N-terminal stretch at M1–S21 is a signal peptide. Cystine bridges form between C54–C61 and C55–C67. F69 is subject to Phenylalanine amide.

Belongs to the conotoxin A superfamily. In terms of tissue distribution, expressed by the venom duct.

Its subcellular location is the secreted. Functionally, probable neurotoxin with unknown target. Possibly targets ion channels. The polypeptide is Conotoxin Pl171 (Conus planorbis (Planorbis cone)).